The chain runs to 60 residues: Ferredoxin (60 aa).

4Fe-4S ferredoxin-type domains are found at residues 2-30 (VTID…EIQG) and 31-60 (DKVV…TVKE). Cys-9, Cys-14, Cys-17, Cys-21, Cys-41, Cys-44, Cys-47, and Cys-51 together coordinate [4Fe-4S] cluster.

[4Fe-4S] cluster serves as cofactor.

Ferredoxins are iron-sulfur proteins that transfer electrons probably in the CO-dehydrogenase complex. This is Ferredoxin from Methanothermococcus thermolithotrophicus (Methanococcus thermolithotrophicus).